The chain runs to 748 residues: Serine/threonine-protein kinase CG17528 (748 aa).

Polar residues-rich tracts occupy residues 22-35 and 47-59; these read QASP…SVPS and EKTN…QEDN. Disordered regions lie at residues 22–41 and 47–81; these read QASP…NVVT and EKTN…ELDD. 6 positions are modified to phosphoserine: serine 67, serine 70, serine 73, serine 87, serine 88, and serine 89. Threonine 91 carries the post-translational modification Phosphothreonine. Position 93 is a phosphoserine (serine 93). Position 100 is a phosphothreonine (threonine 100). Doublecortin domains follow at residues 158-244 and 313-396; these read LRIK…VEYN and RIVT…AEDF. One can recognise a Protein kinase domain in the interval 477 to 735; the sequence is YSLGRIIGDG…SEDILDHSWT (259 aa). Residues 483 to 491 and lysine 506 contribute to the ATP site; that span reads IGDGNFAIV. The Proton acceptor role is filled by aspartate 598.

Belongs to the protein kinase superfamily. CAMK Ser/Thr protein kinase family. CaMK subfamily.

The catalysed reaction is L-seryl-[protein] + ATP = O-phospho-L-seryl-[protein] + ADP + H(+). The enzyme catalyses L-threonyl-[protein] + ATP = O-phospho-L-threonyl-[protein] + ADP + H(+). This chain is Serine/threonine-protein kinase CG17528, found in Drosophila melanogaster (Fruit fly).